The sequence spans 727 residues: Translation initiation factor IF-2, mitochondrial (727 aa).

The transit peptide at 1–29 (MNQKLLKLENLLRFHTIYRQLHSLCQRRA) directs the protein to the mitochondrion. The tr-type G domain maps to 178-348 (PRSPVVTIMG…VALAEMLELK (171 aa)). Positions 187-194 (GHVDHGKT) are G1. 187 to 194 (GHVDHGKT) provides a ligand contact to GTP. Residues 212–216 (GITQH) form a G2 region. Residues 234–237 (DTPG) and 288–291 (NKCD) contribute to the GTP site. The interval 234 to 237 (DTPG) is G3. The G4 stretch occupies residues 288-291 (NKCD). The G5 stretch occupies residues 324–326 (SAL). T688 bears the Phosphothreonine mark.

This sequence belongs to the TRAFAC class translation factor GTPase superfamily. Classic translation factor GTPase family. IF-2 subfamily. Monomer. In terms of tissue distribution, expressed in all tissues examined. Highest level in skeletal muscle.

Its subcellular location is the mitochondrion. One of the essential components for the initiation of protein synthesis. Protects formylmethionyl-tRNA from spontaneous hydrolysis and promotes its binding to the 30S ribosomal subunits. Also involved in the hydrolysis of GTP during the formation of the 70S ribosomal complex. The polypeptide is Translation initiation factor IF-2, mitochondrial (MTIF2) (Homo sapiens (Human)).